Consider the following 461-residue polypeptide: Fumarate hydratase class II (461 aa).

Residues 97 to 99 (SGT), 127 to 130 (HPND), 137 to 139 (SSN), and T185 contribute to the substrate site. The active-site Proton donor/acceptor is the H186. The active site involves S316. Substrate contacts are provided by residues S317 and 322 to 324 (KVN).

It belongs to the class-II fumarase/aspartase family. Fumarase subfamily. Homotetramer.

The protein localises to the cytoplasm. The catalysed reaction is (S)-malate = fumarate + H2O. It participates in carbohydrate metabolism; tricarboxylic acid cycle; (S)-malate from fumarate: step 1/1. Its function is as follows. Involved in the TCA cycle. Catalyzes the stereospecific interconversion of fumarate to L-malate. In Staphylococcus saprophyticus subsp. saprophyticus (strain ATCC 15305 / DSM 20229 / NCIMB 8711 / NCTC 7292 / S-41), this protein is Fumarate hydratase class II.